The following is a 465-amino-acid chain: uncharacterized protein (465 aa).

A helical membrane pass occupies residues 56-76; the sequence is ILYMIIFAIFGLLPFLIALIF. A disordered region spans residues 177 to 198; that stretch reads KFNKSKKSNKINDKTPILNNNN. A helical transmembrane segment spans residues 273–293; that stretch reads LIFLLVSTILLIALIGFILII. The segment at 411–449 is disordered; sequence NNYNNSNNNNNSNNSNSNNNNNNNNNNNNYNNNNYNNNN.

Its subcellular location is the membrane. This is an uncharacterized protein from Dictyostelium discoideum (Social amoeba).